Consider the following 729-residue polypeptide: Ribosomal RNA large subunit methyltransferase K/L (729 aa).

A THUMP domain is found at 47–158 (TFYRLCLWSR…KNELTLALDL (112 aa)).

It belongs to the methyltransferase superfamily. RlmKL family.

Its subcellular location is the cytoplasm. The catalysed reaction is guanosine(2445) in 23S rRNA + S-adenosyl-L-methionine = N(2)-methylguanosine(2445) in 23S rRNA + S-adenosyl-L-homocysteine + H(+). It carries out the reaction guanosine(2069) in 23S rRNA + S-adenosyl-L-methionine = N(2)-methylguanosine(2069) in 23S rRNA + S-adenosyl-L-homocysteine + H(+). Functionally, specifically methylates the guanine in position 2445 (m2G2445) and the guanine in position 2069 (m7G2069) of 23S rRNA. The polypeptide is Ribosomal RNA large subunit methyltransferase K/L (Dichelobacter nodosus (strain VCS1703A)).